The sequence spans 174 residues: D(1B) dopamine receptor (174 aa).

A helical membrane pass occupies residues 1 to 10; it reads SILNLCIISV. Residues 11-32 lie on the Cytoplasmic side of the membrane; sequence DRYWAISRPFCYERKMTQRVAL. A helical membrane pass occupies residues 33–54; sequence VMVGLAWTLSILISFIPVQLHW. Over 55-96 the chain is Extracellular; the sequence is HRDKVGSRDGLDPPSNLANGTPWEEAGESDRSAENCDSSLNR. The segment at 64–88 is disordered; the sequence is GLDPPSNLANGTPWEEAGESDRSAE. N-linked (GlcNAc...) asparagine glycosylation occurs at Asn-95. The helical transmembrane segment at 97–119 threads the bilayer; that stretch reads TYAISSSLISFYIPVAIMIVTYT. Over 120-169 the chain is Cytoplasmic; that stretch reads RIYRIAQVQIRRISSLERAAEHAQSCRSREACAPDSGLRASIKKETKVLK. A helical membrane pass occupies residues 170 to 174; sequence TLSVI.

It belongs to the G-protein coupled receptor 1 family.

It localises to the cell membrane. Dopamine receptor whose activity is mediated by G proteins which activate adenylyl cyclase. The chain is D(1B) dopamine receptor (DRD5) from Bos taurus (Bovine).